The sequence spans 169 residues: Peptide deformylase (169 aa).

2 residues coordinate Fe cation: C94 and H136. Residue E137 is part of the active site. A Fe cation-binding site is contributed by H140.

Belongs to the polypeptide deformylase family. The cofactor is Fe(2+).

It carries out the reaction N-terminal N-formyl-L-methionyl-[peptide] + H2O = N-terminal L-methionyl-[peptide] + formate. Its function is as follows. Removes the formyl group from the N-terminal Met of newly synthesized proteins. Requires at least a dipeptide for an efficient rate of reaction. N-terminal L-methionine is a prerequisite for activity but the enzyme has broad specificity at other positions. This chain is Peptide deformylase, found in Desulfotalea psychrophila (strain LSv54 / DSM 12343).